Here is a 79-residue protein sequence, read N- to C-terminus: Conotoxin Vi6.9 (79 aa).

The first 22 residues, 1 to 22 (MKLTCMVIITVLFLTASQLITA), serve as a signal peptide directing secretion. A propeptide spanning residues 23-47 (DYSRDQRQYRAVRLGDEMRNFKGAR) is cleaved from the precursor. Intrachain disulfides connect cysteine 49-cysteine 62, cysteine 56-cysteine 67, and cysteine 61-cysteine 77. 4-hydroxyproline occurs at positions 60 and 63.

It belongs to the conotoxin O1 superfamily. As to expression, expressed by the venom duct.

Its subcellular location is the secreted. Functionally, ion channel inhibitor that inhibits the increase in intracellular calcium upon depolarization in DRG neurons. In vivo, both intraperitoneal and intracranial injections into mice induce hyperactivity. The sequence is that of Conotoxin Vi6.9 from Conus virgo (Virgin cone).